Consider the following 770-residue polypeptide: MSNEVETSATNGQPDQQAAPKAPSKKEKKKGPEKTDEYLLARFKGDGVKYKAKLIGIDDVPDARGDKMSQDSMMKLKGMAAAGRSQGQHKQRIWVNISLSGIKIIDEKTGVIEHEHPVNKISFIARDVTDNRAFGYVCGGEGQHQFFAIKTGQQAEPLVVDLKDLFQVIYNVKKKEEEKKKIEEASKAVENGSEALMILDDQTNKLKSGVDQMDLFGDMSTPPDLNSPTESKDILLVDLNSEIDTNQNSLRENPFLTNGITSCSLPRPTPQASFLPENAFSANLNFFPTPNPDPFRDDPFTQPDQSTPSSFDSLKSPDQKKENSSSSSTPLSNGPLNGDVDYFGQQFDQISNRTGKQEAQAGPWPFSSSQTQPAVRTQNGVSEREQNGFSVKSSPNPFVGSPPKGLSIQNGVKQDLESSVQSSPHDSIAIIPPPQSTKPGRGRRTAKSSANDLLASDIFAPPVSEPSGQASPTGQPTALQPNPLDLFKTSAPAPVGPLVGLGGVTVTLPQAGPWNTASLVFNQSPSMAPGAMMGGQPSGFSQPVIFGTSPAVSGWNQPSPFAASTPPPVPVVWGPSASVAPNAWSTTSPLGNPFQSNIFPAPAVSTQPPSMHSSLLVTPPQPPPRAGPPKDISSDAFTALDPLGDKEIKDVKEMFKDFQLRQPPAVPARKGEQTSSGTLSAFASYFNSKVGIPQENADHDDFDANQLLNKINEPPKPAPRQVSLPVTKSTDNAFENPFFKDSFGSSQASVASSQPVSSEMYRDPFGNPFA.

The segment covering 1–16 (MSNEVETSATNGQPDQ) has biased composition (polar residues). The tract at residues 1-38 (MSNEVETSATNGQPDQQAAPKAPSKKEKKKGPEKTDEY) is disordered. Ser2 carries the N-acetylserine modification. Phosphoserine is present on Ser2. The 152-residue stretch at 45-196 (GDGVKYKAKL…KAVENGSEAL (152 aa)) folds into the PID domain. Residue Tyr170 is modified to Phosphotyrosine. A Phosphoserine modification is found at Ser193. The required for localization to clathrin-coated pits stretch occupies residues 230 to 447 (ESKDILLVDL…KPGRGRRTAK (218 aa)). Disordered stretches follow at residues 284–482 (LNFF…LQPN) and 604–629 (VSTQ…AGPP). Short sequence motifs (DPF) lie at residues 293–295 (DPF) and 298–300 (DPF). Positions 302–313 (QPDQSTPSSFDS) are enriched in polar residues. Residues Ser326 and Ser328 each carry the phosphoserine; in mitosis modification. Residues 366 to 396 (FSSSQTQPAVRTQNGVSEREQNGFSVKSSPN) are compositionally biased toward polar residues. Ser401 is modified (phosphoserine). 3 stretches are compositionally biased toward polar residues: residues 407–425 (SIQN…SSPH), 466–480 (PSGQ…TALQ), and 604–616 (VSTQ…SSLL). Residues 604-732 (VSTQPPSMHS…SLPVTKSTDN (129 aa)) are sufficient for interaction with GRB2. The segment at 619 to 627 (PPQPPPRAG) is required for interaction with CSK. Residues 649 to 770 (KDVKEMFKDF…YRDPFGNPFA (122 aa)) form a required for interaction with MYO6 region. Residues 663–671 (PPAVPARKG) form a required for interaction with GRB2 and CSK region. Phosphoserine occurs at positions 675, 723, and 729. Positions 709–725 (NKINEPPKPAPRQVSLP) are sufficient for interaction with SH3KBP1 SH3 domain. The segment at 742–770 (SFGSSQASVASSQPVSSEMYRDPFGNPFA) is disordered. Residues 745-758 (SSQASVASSQPVSS) show a composition bias toward low complexity.

Interacts (via NPXY motif) with DAB2 (via PID domain). Can interact (via PID domain) with LDLR, APP, APLP1 and APLP2, and weakly with INPP5D (via NPXY motifs); the interaction is impaired by tyrosine phosphorylation of the respective NPXY motifs. Can weakly interact (via PID domain) with LRP1 (via NPXY motif); the interaction is enhanced by tyrosine phosphorylation of the NPXY motif. Interacts with LRP2 (via NPXY motif); the interaction is not affected by tyrosine phosphorylation of the NPXY motif. Interacts with clathrin; in vitro can assemble clathrin triskelia into polyhedral coats. Interacts with AP2A2, ITGB1, ITGB3, ITGB5, PIAS2, DAB2IP, NOSTRIN, FCHO1, DVL3, EPS15, ITSN1 and EPS15L1. Interacts with SH3KBP1 (via SH3 domains). Interacts with GRB2; competes with SOS1 for binding to GRB2 and the interaction is enhanced by EGF and NT-3 stimulation. Interacts with MAP3K7; the interaction is induced by TGF-beta stimulation and may mediate TGF-beta stimulated JNK activation. Interacts with AXIN1 and PPP1CA; the interactions are mutually exclusive. Interacts with the globular tail of MYO6. Interacts (via DPF motifs) with FCHO2; the interaction is direct and required for DAB2-mediated LDLR endocytosis. Interacts with LRP6; the interaction involves LRP6 phosphorylation by CK2 and sequesters LRP6 towards clathrin-mediated endocytosis. Associates with the TGF-beta receptor complex. Interacts with SMAD2 and SMAD3; the interactions are enhanced upon TGF-beta stimulation. Interacts with GRB2; the interaction is enhanced by EGF and NT-3 stimulation. Interacts with SRC; the interaction is enhanced by EGF stimulation. Phosphorylated. Phosphorylation during mitosis is leading to membrane displacement. As to expression, expressed in deep invaginations, inclusion cysts and the surface epithelial cells of the ovary. Also expressed in breast epithelial cells, spleen, thymus, prostate, testis, macrophages, fibroblasts, lung epithelial cells, placenta, brain stem, heart and small intestine. Expressed in kidney proximal tubular epithelial cells (at protein level).

Its subcellular location is the cytoplasm. It is found in the cytoplasmic vesicle. It localises to the clathrin-coated vesicle membrane. The protein localises to the membrane. The protein resides in the clathrin-coated pit. Functionally, adapter protein that functions as a clathrin-associated sorting protein (CLASP) required for clathrin-mediated endocytosis of selected cargo proteins. Can bind and assemble clathrin, and binds simultaneously to phosphatidylinositol 4,5-bisphosphate (PtdIns(4,5)P2) and cargos containing non-phosphorylated NPXY internalization motifs, such as the LDL receptor, to recruit them to clathrin-coated pits. Can function in clathrin-mediated endocytosis independently of the AP-2 complex. Involved in endocytosis of integrin beta-1; this function seems to redundant with the AP-2 complex and seems to require DAB2 binding to endocytosis accessory EH domain-containing proteins such as EPS15, EPS15L1 and ITSN1. Involved in endocytosis of cystic fibrosis transmembrane conductance regulator/CFTR. Involved in endocytosis of megalin/LRP2 lipoprotein receptor during embryonal development. Required for recycling of the TGF-beta receptor. Involved in CFTR trafficking to the late endosome. Involved in several receptor-mediated signaling pathways. Involved in TGF-beta receptor signaling and facilitates phosphorylation of the signal transducer SMAD2. Mediates TFG-beta-stimulated JNK activation. May inhibit the canoniocal Wnt/beta-catenin signaling pathway by stabilizing the beta-catenin destruction complex through a competing association with axin preventing its dephosphorylation through protein phosphatase 1 (PP1). Sequesters LRP6 towards clathrin-mediated endocytosis, leading to inhibition of Wnt/beta-catenin signaling. May activate non-canonical Wnt signaling. In cell surface growth factor/Ras signaling pathways proposed to inhibit ERK activation by interrupting the binding of GRB2 to SOS1 and to inhibit SRC by preventing its activating phosphorylation at 'Tyr-419'. Proposed to be involved in modulation of androgen receptor (AR) signaling mediated by SRC activation; seems to compete with AR for interaction with SRC. Plays a role in the CSF-1 signal transduction pathway. Plays a role in cellular differentiation. Involved in cell positioning and formation of visceral endoderm (VE) during embryogenesis and proposed to be required in the VE to respond to Nodal signaling coming from the epiblast. Required for the epithelial to mesenchymal transition, a process necessary for proper embryonic development. May be involved in myeloid cell differentiation and can induce macrophage adhesion and spreading. May act as a tumor suppressor. This Homo sapiens (Human) protein is Disabled homolog 2 (DAB2).